Consider the following 273-residue polypeptide: Dermonecrotic toxin LspaSicTox-alphaIA2i (273 aa).

H5 is a catalytic residue. 2 residues coordinate Mg(2+): E25 and D27. H41 serves as the catalytic Nucleophile. Intrachain disulfides connect C45–C51 and C47–C190. D85 serves as a coordination point for Mg(2+).

It belongs to the arthropod phospholipase D family. Class II subfamily. It depends on Mg(2+) as a cofactor. Expressed by the venom gland.

It localises to the secreted. The enzyme catalyses an N-(acyl)-sphingosylphosphocholine = an N-(acyl)-sphingosyl-1,3-cyclic phosphate + choline. It carries out the reaction an N-(acyl)-sphingosylphosphoethanolamine = an N-(acyl)-sphingosyl-1,3-cyclic phosphate + ethanolamine. It catalyses the reaction a 1-acyl-sn-glycero-3-phosphocholine = a 1-acyl-sn-glycero-2,3-cyclic phosphate + choline. The catalysed reaction is a 1-acyl-sn-glycero-3-phosphoethanolamine = a 1-acyl-sn-glycero-2,3-cyclic phosphate + ethanolamine. Dermonecrotic toxins cleave the phosphodiester linkage between the phosphate and headgroup of certain phospholipids (sphingolipid and lysolipid substrates), forming an alcohol (often choline) and a cyclic phosphate. This toxin acts on sphingomyelin (SM). It may also act on ceramide phosphoethanolamine (CPE), lysophosphatidylcholine (LPC) and lysophosphatidylethanolamine (LPE), but not on lysophosphatidylserine (LPS), and lysophosphatidylglycerol (LPG). It acts by transphosphatidylation, releasing exclusively cyclic phosphate products as second products. Induces dermonecrosis, hemolysis, increased vascular permeability, edema, inflammatory response, and platelet aggregation. The polypeptide is Dermonecrotic toxin LspaSicTox-alphaIA2i (Loxosceles spadicea (Recluse spider)).